A 31-amino-acid polypeptide reads, in one-letter code: uncharacterized protein (31 aa).

The tract at residues 1 to 31 is disordered; it reads MKKLERMSEVSQMCSEAKKNRKRMSVVSSVA.

This is an uncharacterized protein from Sulfolobus islandicus filamentous virus (isolate Iceland/Hveragerdi) (SIFV).